Reading from the N-terminus, the 176-residue chain is Neuroblastoma suppressor of tumorigenicity 1 (176 aa).

Residues 1 to 17 form the signal peptide; the sequence is MTVWLLIGFLLPVAIFA. Disulfide bonds link cysteine 34/cysteine 84, cysteine 48/cysteine 98, cysteine 58/cysteine 117, cysteine 62/cysteine 119, and cysteine 81/cysteine 122. The CTCK domain maps to 34 to 123; the sequence is CEAKNITQIV…ILQCSCQACG (90 aa). The tract at residues 148–176 is disordered; that stretch reads ETLGHHHHRPPAREEDSPAQSQREGESEE.

This sequence belongs to the DAN family. Interacts with bmp2; the interaction is blocked in presence of nog.

The protein resides in the secreted. In terms of biological role, may act as a tumor suppressor. Cytokine that has an axial patterning activity. Acts like bone morpho-genetic protein (BMP) antagonist in embryonic explants. Blocks the bmp2 activity. This Xenopus tropicalis (Western clawed frog) protein is Neuroblastoma suppressor of tumorigenicity 1 (nbl1).